A 214-amino-acid chain; its full sequence is LINYKNMLHQHPLKLFNLLPVGSNISTWWNFGSMLLACLMIQTVTGFFLAIHYTANINLAFSSIIHITRDVPYGWIMQNTHAIGASMFFMCIYTHIARGLYYGSYLNKEVWLSGTTLLIVLMRTAFFGYVLPWGQMSFWAATVITNLLTAIPYLGNTLTTWLWGGFSINDPTLTRFFALHFILPFIIISLSSIHIILLHNEGSSNPLGTNSDID.

The next 4 helical transmembrane spans lie at 31–51 (FGSM…FLAI), 75–96 (WIMQ…YTHI), 111–131 (WLSG…GYVL), and 176–196 (FFAL…IHII). Positions 81 and 95 each coordinate heme b. Residues histidine 180 and histidine 194 each contribute to the heme b site. Histidine 199 is a binding site for a ubiquinone.

Belongs to the cytochrome b family. The cytochrome bc1 complex contains 3 respiratory subunits (MT-CYB, CYC1 and UQCRFS1), 2 core proteins (UQCRC1 and UQCRC2) and probably 6 low-molecular weight proteins. Heme b is required as a cofactor.

It localises to the mitochondrion inner membrane. Component of the ubiquinol-cytochrome c reductase complex (complex III or cytochrome b-c1 complex) that is part of the mitochondrial respiratory chain. The b-c1 complex mediates electron transfer from ubiquinol to cytochrome c. Contributes to the generation of a proton gradient across the mitochondrial membrane that is then used for ATP synthesis. This is Cytochrome b (MT-CYB) from Cerastes cerastes (Horned desert viper).